The chain runs to 793 residues: Serine/threonine-protein phosphatase BSU1 (793 aa).

Kelch repeat units lie at residues 53-109, 110-160, 214-262, 264-314, and 329-388; these read STTA…LYGT, LILI…IAAQ, IFLL…VFGG, KLHV…NQYQ, and HLYV…EASS. Residues Ser-395 and Ser-444 each carry the phosphoserine modification. 4 residues coordinate Mn(2+): Asp-510, His-512, Asp-544, and Asn-576. The active-site Proton donor is the His-577. Mn(2+) is bound by residues His-629 and His-707. Ser-764 carries the phosphoserine modification.

It belongs to the PPP phosphatase family. BSU subfamily. In terms of assembly, interacts with CDG1, CDL1 and ASK7/BIN2. Requires Mn(2+) as cofactor. Post-translationally, phosphorylated at Ser-395 and Ser-444. Phosphorylated at Ser-764 by CDG1 and CDL1. As to expression, mainly expressed in young, elongating tissues. In young seedlings, it is expressed at the base of the hypocotyl, at the tip and most peripheral cell layers of cotyledons, and in the vascular cylinder of roots, particularly in the elongation zone and at the point of emergence of lateral roots. In mature plants, it is still present in the root vasculature, but almost completely absent in fully expanded stems and leaves. In flowers, it is mainly expressed in sepal veins, anther filaments, and in the style, suggesting that BSU1 is expressed in actively growing regions and apparently enriched in vascular tissues.

The protein resides in the nucleus. The enzyme catalyses O-phospho-L-seryl-[protein] + H2O = L-seryl-[protein] + phosphate. The catalysed reaction is O-phospho-L-threonyl-[protein] + H2O = L-threonyl-[protein] + phosphate. With respect to regulation, activated by phosphorylation at Ser-764 by CDG1. Functionally, phosphatase that acts as a positive regulator of brassinosteroid (BR) signaling. Dephosphorylates BES1, a transcription factor that regulates the expression of BR-response genes, thereby playing an important role in the regulation of response to BRs. Inactivates the negative regulator of BR signaling ASK7/BIN2 by dephosphorylation at 'Tyr-200'. This chain is Serine/threonine-protein phosphatase BSU1 (BSU1), found in Arabidopsis thaliana (Mouse-ear cress).